We begin with the raw amino-acid sequence, 483 residues long: Glutamyl-tRNA(Gln) amidotransferase subunit A (483 aa).

Active-site charge relay system residues include Lys-76 and Ser-151. The Acyl-ester intermediate role is filled by Ser-175.

Belongs to the amidase family. GatA subfamily. Heterotrimer of A, B and C subunits.

The enzyme catalyses L-glutamyl-tRNA(Gln) + L-glutamine + ATP + H2O = L-glutaminyl-tRNA(Gln) + L-glutamate + ADP + phosphate + H(+). Allows the formation of correctly charged Gln-tRNA(Gln) through the transamidation of misacylated Glu-tRNA(Gln) in organisms which lack glutaminyl-tRNA synthetase. The reaction takes place in the presence of glutamine and ATP through an activated gamma-phospho-Glu-tRNA(Gln). The protein is Glutamyl-tRNA(Gln) amidotransferase subunit A of Pseudomonas fluorescens (strain SBW25).